Reading from the N-terminus, the 133-residue chain is Small heat shock protein ibp (133 aa).

The region spanning 11-126 (EQPLSENPNY…KPKKISINEE (116 aa)) is the sHSP domain.

Belongs to the small heat shock protein (HSP20) family.

The chain is Small heat shock protein ibp (ibp) from Wigglesworthia glossinidia brevipalpis.